A 427-amino-acid chain; its full sequence is UDP-N-acetyl-D-mannosamine dehydrogenase (427 aa).

Positions 19, 20, 39, 44, 91, and 130 each coordinate NAD(+). Positions 155, 156, 207, 211, 214, 245, 247, and 258 each coordinate UDP-N-acetyl-alpha-D-mannosaminouronate. Lys207 acts as the Proton donor/acceptor in catalysis. Cys261 acts as the Nucleophile in catalysis. The UDP-N-acetyl-alpha-D-mannosaminouronate site is built by Tyr318 and Lys319. Residue Arg326 participates in NAD(+) binding. A UDP-N-acetyl-alpha-D-mannosaminouronate-binding site is contributed by Lys404.

It belongs to the UDP-glucose/GDP-mannose dehydrogenase family. As to quaternary structure, homotetramer; probably dimer of dimers.

The catalysed reaction is UDP-N-acetyl-alpha-D-mannosamine + 2 NAD(+) + H2O = UDP-N-acetyl-alpha-D-mannosaminouronate + 2 NADH + 3 H(+). Catalyzes the four-electron oxidation of UDP-N-acetyl-D-mannosamine (UDP-ManNAc), reducing NAD(+) and releasing UDP-N-acetylmannosaminuronic acid (UDP-ManNAcA). The sequence is that of UDP-N-acetyl-D-mannosamine dehydrogenase (wecC) from Methanococcus maripaludis (strain C7 / ATCC BAA-1331).